An 887-amino-acid chain; its full sequence is Degenerin-like protein unc-105 (887 aa).

Residues 1–33 (MAEDRIKSKLRRPASIESTMSSRTKPRHKPSPM) form a disordered region. Topologically, residues 1–93 (MAEDRIKSKL…AATADGKWRW (93 aa)) are cytoplasmic. A helical membrane pass occupies residues 94–114 (FWYTAFTICLLALLIQIFFLI). Topologically, residues 115–698 (SKYRQYGKTV…SVLADLGGLT (584 aa)) are extracellular. Asn-244, Asn-450, Asn-473, Asn-581, and Asn-599 each carry an N-linked (GlcNAc...) asparagine glycan. The helical transmembrane segment at 699–719 (GLWIGASVVSLLEIVTLIVFA) threads the bilayer. Residues 720–887 (TQAYVRKRKG…YSAPYEHRKK (168 aa)) lie on the Cytoplasmic side of the membrane. 2 disordered regions span residues 794 to 815 (AIQEQSDDEEETTESSRTNGSC) and 859 to 887 (SNSEEEDAEDEVHREPEPFYSAPYEHRKK).

This sequence belongs to the amiloride-sensitive sodium channel (TC 1.A.6) family. In terms of tissue distribution, expressed in body wall muscle.

It localises to the membrane. In terms of biological role, ion channel which is permeable to small monovalent cations. Shown not to be H+-ion gated. May be mechanosensitive and is required for growth and muscle development. In Caenorhabditis elegans, this protein is Degenerin-like protein unc-105 (unc-105).